Here is a 270-residue protein sequence, read N- to C-terminus: 5'-nucleotidase SurE (270 aa).

Residues D14, D15, S46, and N104 each coordinate a divalent metal cation.

The protein belongs to the SurE nucleotidase family. A divalent metal cation is required as a cofactor.

The protein resides in the cytoplasm. The enzyme catalyses a ribonucleoside 5'-phosphate + H2O = a ribonucleoside + phosphate. In terms of biological role, nucleotidase that shows phosphatase activity on nucleoside 5'-monophosphates. This chain is 5'-nucleotidase SurE, found in Microcystis aeruginosa (strain NIES-843 / IAM M-2473).